We begin with the raw amino-acid sequence, 248 residues long: Flavodoxin/ferredoxin--NADP reductase (248 aa).

An FAD-binding FR-type domain is found at alanine 2–aspartate 101. Residues arginine 50–serine 53, tyrosine 66, lysine 74–serine 76, and threonine 116 contribute to the FAD site. NADP(+) is bound by residues alanine 143–arginine 144, serine 173–arginine 174, arginine 184, asparagine 214–glutamine 216, and aspartate 220. FAD is bound at residue tyrosine 247 to tryptophan 248.

This sequence belongs to the ferredoxin--NADP reductase type 1 family. It depends on FAD as a cofactor.

It is found in the cytoplasm. It catalyses the reaction 2 reduced [2Fe-2S]-[ferredoxin] + NADP(+) + H(+) = 2 oxidized [2Fe-2S]-[ferredoxin] + NADPH. The catalysed reaction is reduced [flavodoxin] + NADP(+) = oxidized [flavodoxin] + NADPH + 2 H(+). Transports electrons between flavodoxin or ferredoxin and NADPH. This chain is Flavodoxin/ferredoxin--NADP reductase (fpr), found in Shigella flexneri.